A 127-amino-acid chain; its full sequence is Small ribosomal subunit protein bS6 (127 aa).

It belongs to the bacterial ribosomal protein bS6 family.

Binds together with bS18 to 16S ribosomal RNA. The sequence is that of Small ribosomal subunit protein bS6 from Sulfurovum sp. (strain NBC37-1).